A 569-amino-acid chain; its full sequence is AA9 family lytic polysaccharide monooxygenase A (569 aa).

An N-terminal signal peptide occupies residues 1 to 16; sequence MRIFSLALGFLPLVAG. Residues His-17 and His-99 each contribute to the Cu(2+) site. Cys-59 and Cys-189 are joined by a disulfide. Residue Asn-112 is glycosylated (N-linked (GlcNAc...) asparagine). O2 contacts are provided by His-174 and Gln-184. A Cu(2+)-binding site is contributed by Tyr-186. Residues Asn-244 and Asn-381 are each glycosylated (N-linked (GlcNAc...) asparagine). Over residues 399 to 424 the composition is skewed to low complexity; that stretch reads AADATATATATTEDAEATTAAEAAAT. Positions 399–439 are disordered; it reads AADATATATATTEDAEATTAAEAAATSGAGRPGRGHGHGRG. N-linked (GlcNAc...) asparagine glycosylation occurs at Asn-472.

The protein belongs to the polysaccharide monooxygenase AA9 family. Cu(2+) is required as a cofactor.

The protein resides in the secreted. It carries out the reaction [(1-&gt;4)-beta-D-glucosyl]n+m + reduced acceptor + O2 = 4-dehydro-beta-D-glucosyl-[(1-&gt;4)-beta-D-glucosyl]n-1 + [(1-&gt;4)-beta-D-glucosyl]m + acceptor + H2O.. In terms of biological role, lytic polysaccharide monooxygenase (LPMO) that depolymerizes crystalline and amorphous polysaccharides via the oxidation of scissile alpha- or beta-(1-4)-glycosidic bonds, yielding C4 oxidation products. Catalysis by LPMOs requires the reduction of the active-site copper from Cu(II) to Cu(I) by a reducing agent and H(2)O(2) or O(2) as a cosubstrate. This is AA9 family lytic polysaccharide monooxygenase A from Emericella nidulans (strain FGSC A4 / ATCC 38163 / CBS 112.46 / NRRL 194 / M139) (Aspergillus nidulans).